We begin with the raw amino-acid sequence, 163 residues long: Cell division protein SepF (163 aa).

A disordered region spans residues 25-53; the sequence is SVAPHSGEERESAFSRRSAERAERTERPT. Positions 30–51 are enriched in basic and acidic residues; the sequence is SGEERESAFSRRSAERAERTER.

This sequence belongs to the SepF family. As to quaternary structure, homodimer. Interacts with FtsZ.

It localises to the cytoplasm. Cell division protein that is part of the divisome complex and is recruited early to the Z-ring. Probably stimulates Z-ring formation, perhaps through the cross-linking of FtsZ protofilaments. Its function overlaps with FtsA. This Heliobacterium modesticaldum (strain ATCC 51547 / Ice1) protein is Cell division protein SepF.